Here is a 248-residue protein sequence, read N- to C-terminus: Glutaredoxin domain-containing cysteine-rich protein 2 (248 aa).

Composition is skewed to basic and acidic residues over residues Met-1 to Pro-16 and Leu-157 to Arg-172. Disordered regions lie at residues Met-1–Arg-20 and Glu-150–Arg-172.

The protein belongs to the GRXCR2 family. Interacts with TPRN; the interaction restricts TPRN to the stereocilum basal region.

It is found in the cell projection. It localises to the stereocilium. Required for hearing. Plays a role in maintaining cochlear stereocilia bundles that are involved in sound detection. Ensures the restriction of TPRN to the basal region of stereocilia in hair cells. The polypeptide is Glutaredoxin domain-containing cysteine-rich protein 2 (GRXCR2) (Homo sapiens (Human)).